The following is a 398-amino-acid chain: Na(+)/H(+) antiporter NhaA (398 aa).

Helical transmembrane passes span 14–34, 60–80, 96–116, 125–145, 155–175, 179–199, 214–234, 263–283, 292–312, 330–350, and 362–382; these read AAGV…NWSV, LLLW…GLEV, MLPL…FLLF, VGWA…LTLL, VFLL…IALF, QIFW…AYLN, IVLW…GVIV, FLII…GIVL, LGIA…LSWL, IVAV…ITLL, and YAKL…YLAL.

It belongs to the NhaA Na(+)/H(+) (TC 2.A.33) antiporter family.

It is found in the cell inner membrane. It catalyses the reaction Na(+)(in) + 2 H(+)(out) = Na(+)(out) + 2 H(+)(in). Functionally, na(+)/H(+) antiporter that extrudes sodium in exchange for external protons. The protein is Na(+)/H(+) antiporter NhaA of Pectobacterium carotovorum subsp. carotovorum (strain PC1).